We begin with the raw amino-acid sequence, 213 residues long: Eukaryotic translation initiation factor 4E (213 aa).

A phosphoserine; by CK2 mark is found at Ser-2 and Ser-15. Residue Thr-22 is modified to Phosphothreonine. Phosphoserine occurs at positions 28 and 30. A Glycyl lysine isopeptide (Lys-Gly) (interchain with G-Cter in ubiquitin) cross-link involves residue Lys-114.

Belongs to the eukaryotic initiation factor 4E family. Component of the eIF4F complex, which composition varies with external and internal environmental conditions. It is composed of at least eIF4A (TIF1/TIF2), eIF4E (TIF45) and eIF4G (TIF4631 or TIF4632). Interacts with PAT1 in a RNA-dependent manner. eIF4E is also known to interact with other partners.

The protein resides in the cytoplasm. It localises to the nucleus. In terms of biological role, recognizes and binds the 7-methylguanosine (m7G)-containing mRNA cap during an early step in the initiation of protein synthesis and facilitates ribosome binding by inducing the unwinding of the mRNAs secondary structures. This is Eukaryotic translation initiation factor 4E (CDC33) from Saccharomyces cerevisiae (strain ATCC 204508 / S288c) (Baker's yeast).